The following is a 214-amino-acid chain: Phosphatidylserine decarboxylase proenzyme (214 aa).

Serine 182 functions as the Schiff-base intermediate with substrate; via pyruvic acid in the catalytic mechanism. Pyruvic acid (Ser); by autocatalysis is present on serine 182.

It belongs to the phosphatidylserine decarboxylase family. PSD-A subfamily. In terms of assembly, heterodimer of a large membrane-associated beta subunit and a small pyruvoyl-containing alpha subunit. Pyruvate is required as a cofactor. In terms of processing, is synthesized initially as an inactive proenzyme. Formation of the active enzyme involves a self-maturation process in which the active site pyruvoyl group is generated from an internal serine residue via an autocatalytic post-translational modification. Two non-identical subunits are generated from the proenzyme in this reaction, and the pyruvate is formed at the N-terminus of the alpha chain, which is derived from the carboxyl end of the proenzyme. The post-translation cleavage follows an unusual pathway, termed non-hydrolytic serinolysis, in which the side chain hydroxyl group of the serine supplies its oxygen atom to form the C-terminus of the beta chain, while the remainder of the serine residue undergoes an oxidative deamination to produce ammonia and the pyruvoyl prosthetic group on the alpha chain.

It localises to the cell membrane. The catalysed reaction is a 1,2-diacyl-sn-glycero-3-phospho-L-serine + H(+) = a 1,2-diacyl-sn-glycero-3-phosphoethanolamine + CO2. It participates in phospholipid metabolism; phosphatidylethanolamine biosynthesis; phosphatidylethanolamine from CDP-diacylglycerol: step 2/2. Functionally, catalyzes the formation of phosphatidylethanolamine (PtdEtn) from phosphatidylserine (PtdSer). In Burkholderia ambifaria (strain MC40-6), this protein is Phosphatidylserine decarboxylase proenzyme.